The chain runs to 191 residues: Protein RER1A (191 aa).

An N-acetylmethionine modification is found at M1. 4 helical membrane passes run 39–57 (YRWI…RVYY), 60–80 (GFYI…IGFL), 115–135 (FKFW…TFFS), and 136–156 (VFDV…LFVL).

The protein belongs to the RER1 family.

Its subcellular location is the membrane. Involved in the retrieval of endoplasmic reticulum membrane proteins from the early Golgi compartment. The polypeptide is Protein RER1A (RER1A) (Arabidopsis thaliana (Mouse-ear cress)).